Consider the following 331-residue polypeptide: Beta-ketoacyl-[acyl-carrier-protein] synthase III (331 aa).

Active-site residues include cysteine 113 and histidine 253. An ACP-binding region spans residues 254–258 (QANTR). Asparagine 283 is an active-site residue.

Belongs to the thiolase-like superfamily. FabH family. In terms of assembly, homodimer.

It localises to the cytoplasm. The enzyme catalyses malonyl-[ACP] + acetyl-CoA + H(+) = 3-oxobutanoyl-[ACP] + CO2 + CoA. It functions in the pathway lipid metabolism; fatty acid biosynthesis. Catalyzes the condensation reaction of fatty acid synthesis by the addition to an acyl acceptor of two carbons from malonyl-ACP. Catalyzes the first condensation reaction which initiates fatty acid synthesis and may therefore play a role in governing the total rate of fatty acid production. Possesses both acetoacetyl-ACP synthase and acetyl transacylase activities. Its substrate specificity determines the biosynthesis of branched-chain and/or straight-chain of fatty acids. This is Beta-ketoacyl-[acyl-carrier-protein] synthase III from Desulfitobacterium hafniense (strain Y51).